Reading from the N-terminus, the 271-residue chain is ATP synthase subunit a (271 aa).

A run of 5 helical transmembrane segments spans residues 38-58, 100-120, 146-166, 220-240, and 242-262; these read FWTL…LFLV, LIAP…LMDL, DVNI…FYSI, LIFI…LNVP, and AIFH…LTIV.

Belongs to the ATPase A chain family. In terms of assembly, F-type ATPases have 2 components, CF(1) - the catalytic core - and CF(0) - the membrane proton channel. CF(1) has five subunits: alpha(3), beta(3), gamma(1), delta(1), epsilon(1). CF(0) has three main subunits: a(1), b(2) and c(9-12). The alpha and beta chains form an alternating ring which encloses part of the gamma chain. CF(1) is attached to CF(0) by a central stalk formed by the gamma and epsilon chains, while a peripheral stalk is formed by the delta and b chains.

It is found in the cell inner membrane. In terms of biological role, key component of the proton channel; it plays a direct role in the translocation of protons across the membrane. This Salmonella choleraesuis (strain SC-B67) protein is ATP synthase subunit a.